An 84-amino-acid polypeptide reads, in one-letter code: Beta-defensin 119 (84 aa).

The signal sequence occupies residues 1–21 (MKLLYLFLAILLAIEEPVISG). Intrachain disulfides connect cysteine 28–cysteine 55, cysteine 35–cysteine 49, and cysteine 39–cysteine 56.

It belongs to the beta-defensin family.

It localises to the secreted. Has antibacterial activity. The polypeptide is Beta-defensin 119 (DEFB119) (Hylobates lar (Lar gibbon)).